Here is a 642-residue protein sequence, read N- to C-terminus: Threonine--tRNA ligase (642 aa).

The TGS domain occupies 1-61 (MPIITLPDGS…EEDASLEIIT (61 aa)). Residues 244–535 (DHRKIGKQLD…LIEEYAGFFP (292 aa)) form a catalytic region. Zn(2+) is bound by residues cysteine 335, histidine 386, and histidine 512.

This sequence belongs to the class-II aminoacyl-tRNA synthetase family. In terms of assembly, homodimer. It depends on Zn(2+) as a cofactor.

The protein localises to the cytoplasm. It carries out the reaction tRNA(Thr) + L-threonine + ATP = L-threonyl-tRNA(Thr) + AMP + diphosphate + H(+). Catalyzes the attachment of threonine to tRNA(Thr) in a two-step reaction: L-threonine is first activated by ATP to form Thr-AMP and then transferred to the acceptor end of tRNA(Thr). Also edits incorrectly charged L-seryl-tRNA(Thr). This is Threonine--tRNA ligase from Vibrio vulnificus (strain YJ016).